Here is a 362-residue protein sequence, read N- to C-terminus: 3-dehydroquinate synthase (362 aa).

NAD(+)-binding positions include 71 to 76, 105 to 109, 129 to 130, Lys142, Lys151, and 169 to 172; these read DGERYK, GVIGD, TT, and CLKT. Residues Glu184, His247, and His264 each coordinate Zn(2+).

It belongs to the sugar phosphate cyclases superfamily. Dehydroquinate synthase family. The cofactor is Co(2+). Zn(2+) serves as cofactor. It depends on NAD(+) as a cofactor.

The protein localises to the cytoplasm. The catalysed reaction is 7-phospho-2-dehydro-3-deoxy-D-arabino-heptonate = 3-dehydroquinate + phosphate. It participates in metabolic intermediate biosynthesis; chorismate biosynthesis; chorismate from D-erythrose 4-phosphate and phosphoenolpyruvate: step 2/7. Catalyzes the conversion of 3-deoxy-D-arabino-heptulosonate 7-phosphate (DAHP) to dehydroquinate (DHQ). This chain is 3-dehydroquinate synthase, found in Salmonella arizonae (strain ATCC BAA-731 / CDC346-86 / RSK2980).